Consider the following 236-residue polypeptide: Purine nucleoside phosphorylase DeoD-type (236 aa).

Position 5 (H5) interacts with a purine D-ribonucleoside. Phosphate is bound by residues G21, R25, R44, and 88–91; that span reads RIGS. Residues 180–182 and 204–205 contribute to the a purine D-ribonucleoside site; these read EME and SD. Residue D205 is the Proton donor of the active site.

Belongs to the PNP/UDP phosphorylase family. In terms of assembly, homohexamer; trimer of homodimers.

It carries out the reaction a purine D-ribonucleoside + phosphate = a purine nucleobase + alpha-D-ribose 1-phosphate. It catalyses the reaction a purine 2'-deoxy-D-ribonucleoside + phosphate = a purine nucleobase + 2-deoxy-alpha-D-ribose 1-phosphate. Functionally, catalyzes the reversible phosphorolytic breakdown of the N-glycosidic bond in the beta-(deoxy)ribonucleoside molecules, with the formation of the corresponding free purine bases and pentose-1-phosphate. In Hahella chejuensis (strain KCTC 2396), this protein is Purine nucleoside phosphorylase DeoD-type.